Reading from the N-terminus, the 252-residue chain is Chitooligosaccharide deacetylase (252 aa).

Mg(2+) is bound by residues His-61 and His-125.

It belongs to the YdjC deacetylase family. ChbG subfamily. In terms of assembly, homodimer. The cofactor is Mg(2+).

The protein resides in the cytoplasm. It catalyses the reaction N,N'-diacetylchitobiose + H2O = N-acetyl-beta-D-glucosaminyl-(1-&gt;4)-D-glucosamine + acetate. It carries out the reaction diacetylchitobiose-6'-phosphate + H2O = N'-monoacetylchitobiose-6'-phosphate + acetate. Its pathway is glycan degradation; chitin degradation. Functionally, involved in the degradation of chitin. ChbG is essential for growth on the acetylated chitooligosaccharides chitobiose and chitotriose but is dispensable for growth on cellobiose and chitosan dimer, the deacetylated form of chitobiose. Deacetylation of chitobiose-6-P and chitotriose-6-P is necessary for both the activation of the chb promoter by the regulatory protein ChbR and the hydrolysis of phosphorylated beta-glucosides by the phospho-beta-glucosidase ChbF. Catalyzes the removal of only one acetyl group from chitobiose-6-P to yield monoacetylchitobiose-6-P, the inducer of ChbR and the substrate of ChbF. The chain is Chitooligosaccharide deacetylase from Salmonella paratyphi B (strain ATCC BAA-1250 / SPB7).